A 107-amino-acid polypeptide reads, in one-letter code: Essential MCU regulator, mitochondrial (107 aa).

The transit peptide at 1-47 (MASTAARRLAWVAVRPGALWSGPRGRRGGDVYTVPGSSGLSQVPSRS) directs the protein to the mitochondrion. Topologically, residues 48-65 (VIVTRSGAILPKPVKMSF) are mitochondrial matrix. Residues 66 to 85 (GLLRVFSIVIPFLYVGTLIS) traverse the membrane as a helical segment. Residues 81 to 85 (GTLIS) carry the GXXXX[G/A/S] motif. Residues 86-107 (KNFAALLEEHDIFVPEDDDDDD) are Mitochondrial intermembrane-facing.

The protein belongs to the SMDT1/EMRE family. Component of the uniplex complex, composed of MCU, EMRE/SMDT1, MICU1 and MICU2 (or MICU3) in a 4:4:1:1 stoichiometry. The number of EMRE/SMDT1 molecules is hovewer variable, ranging from 1 to 4 copies per uniplex complex, leading to uniplex complexes with distinct gatekeeping profiles. Interacts (via its C-terminal poly-Asp tail) with MCUR1; the interaction is direct. Unprocessed form interacts (via transit peptide) with MAIP1. In terms of processing, undergoes proteolytic degradation in neurons: degraded by AFG3L2 and SPG7 before SMDT1/EMRE assembly with the uniporter complex, limiting the availability of SMDT1/EMRE for MCU assembly and promoting efficient assembly of gatekeeper subunits with MCU. In terms of tissue distribution, widely expressed.

The protein resides in the mitochondrion inner membrane. Its function is as follows. Essential regulatory subunit of the mitochondrial calcium uniporter complex (uniplex), a complex that mediates calcium uptake into mitochondria. Required to bridge the calcium-sensing proteins MICU1 with the calcium-conducting subunit MCU. Acts by mediating activation of MCU and retention of MICU1 to the MCU pore, in order to ensure tight regulation of the uniplex complex and appropriate responses to intracellular calcium signaling. This chain is Essential MCU regulator, mitochondrial, found in Mus musculus (Mouse).